The chain runs to 47 residues: Lysis protein for colicin E9 (47 aa).

The first 19 residues, 1–19 (MKKITGIILLLLAAIILAA), serve as a signal peptide directing secretion. A lipid anchor (N-palmitoyl cysteine) is attached at cysteine 20. Cysteine 20 carries S-diacylglycerol cysteine lipidation.

The protein resides in the cell outer membrane. In terms of biological role, lysis proteins are required for both colicin release and partial cell lysis. The sequence is that of Lysis protein for colicin E9 (lys) from Escherichia coli.